The sequence spans 329 residues: Beta-ketoacyl-[acyl-carrier-protein] synthase III (329 aa).

Catalysis depends on residues Cys-123 and His-256. An ACP-binding region spans residues 257–261 (QANVR). Residue Asn-286 is part of the active site.

It belongs to the thiolase-like superfamily. FabH family. As to quaternary structure, homodimer.

The protein resides in the cytoplasm. It carries out the reaction malonyl-[ACP] + acetyl-CoA + H(+) = 3-oxobutanoyl-[ACP] + CO2 + CoA. The protein operates within lipid metabolism; fatty acid biosynthesis. Catalyzes the condensation reaction of fatty acid synthesis by the addition to an acyl acceptor of two carbons from malonyl-ACP. Catalyzes the first condensation reaction which initiates fatty acid synthesis and may therefore play a role in governing the total rate of fatty acid production. Possesses both acetoacetyl-ACP synthase and acetyl transacylase activities. Its substrate specificity determines the biosynthesis of branched-chain and/or straight-chain of fatty acids. The protein is Beta-ketoacyl-[acyl-carrier-protein] synthase III of Bordetella parapertussis (strain 12822 / ATCC BAA-587 / NCTC 13253).